The following is a 551-amino-acid chain: MKANHIRILLLVTIAIMFISLMGKWEQTFPADNTKQQTSATQNNSHYDNADSSTNTDVTTTDAKSSLAKETNFSKYDNAKSITINTGVFKDVKVSLLDGAIISASLKDYSISLDDKTPMSLLTDKSGSEYIAKSTIVVNKQPISVNFEDQGIKTENGKQILTLTGSADGLQITRTYTFDDTKYNISVSQNIKNTTSAPVNVIVDDSFARDFDPAGDSFSLLNAHSYTFTGVAYSTAKDSFRKESFKDISKTNGQPTVINSDGQGWVAFLQHYFVSAWIPQSTNAKIYYKNLNGDVFEAGAFTGATIAPNQSENISSILYTGPIIKANLVDLAPNLEKTLDYGMLSFFSEIIFWVMNHIHSLVGNWGLAIILVTCLIKLIFYPLSAKSYRSMAKMRMLQPRIKRLQETYKDDRQALGKKMMELYKEEKVNPLSGCLPMLIQIPIFISLYWVLLESVELRQAPFIFWIHDLSMKDPYFVLPVLMGLSMFLQQKLSPAPADPMQAKVMMFLPVIFTFLFASFPSGLVLYWLTNNLISISQQWIITRHYQATHKK.

A helical transmembrane segment spans residues Ala3–Gly23. A compositionally biased stretch (polar residues) spans Asn33 to Tyr47. The segment at Asn33–Val58 is disordered. The next 3 helical transmembrane spans lie at Leu361–Tyr381, Leu431–Leu451, and Val504–Val524.

Belongs to the OXA1/ALB3/YidC family. Type 1 subfamily. In terms of assembly, interacts with the Sec translocase complex via SecD. Specifically interacts with transmembrane segments of nascent integral membrane proteins during membrane integration.

The protein resides in the cell inner membrane. Functionally, required for the insertion and/or proper folding and/or complex formation of integral membrane proteins into the membrane. Involved in integration of membrane proteins that insert both dependently and independently of the Sec translocase complex, as well as at least some lipoproteins. Aids folding of multispanning membrane proteins. The sequence is that of Membrane protein insertase YidC from Francisella tularensis subsp. novicida (strain U112).